The sequence spans 505 residues: Glycerol kinase (505 aa).

Position 13 (Thr13) interacts with ADP. Residues Thr13, Thr14, and Ser15 each coordinate ATP. Thr13 contributes to the sn-glycerol 3-phosphate binding site. Arg17 is a binding site for ADP. Arg83, Glu84, Tyr135, and Asp247 together coordinate sn-glycerol 3-phosphate. Arg83, Glu84, Tyr135, Asp247, and Gln248 together coordinate glycerol. 2 residues coordinate ADP: Thr269 and Gly313. Thr269, Gly313, Gln317, and Gly414 together coordinate ATP. Positions 414 and 418 each coordinate ADP.

The protein belongs to the FGGY kinase family.

It carries out the reaction glycerol + ATP = sn-glycerol 3-phosphate + ADP + H(+). It participates in polyol metabolism; glycerol degradation via glycerol kinase pathway; sn-glycerol 3-phosphate from glycerol: step 1/1. Inhibited by fructose 1,6-bisphosphate (FBP). Its function is as follows. Key enzyme in the regulation of glycerol uptake and metabolism. Catalyzes the phosphorylation of glycerol to yield sn-glycerol 3-phosphate. This Clavibacter michiganensis subsp. michiganensis (strain NCPPB 382) protein is Glycerol kinase.